Here is a 176-residue protein sequence, read N- to C-terminus: Endothelin-2 (176 aa).

The first 22 residues, 1 to 22 (MVSPAWCSIALALLLALHEGKG), serve as a signal peptide directing secretion. Residues 23–44 (QAAATMEQPASAPKGRGPHLRF) constitute a propeptide that is removed on maturation. 2 cysteine pairs are disulfide-bonded: Cys-47–Cys-61 and Cys-49–Cys-57. Residues 68 to 176 (VNTAGQTAPY…IPAHSRRRKR (109 aa)) constitute a propeptide that is removed on maturation. An endothelin-like region spans residues 94 to 109 (CECSSAGDSACATFCH).

This sequence belongs to the endothelin/sarafotoxin family.

Its subcellular location is the secreted. Vasoconstrictor. The chain is Endothelin-2 (Edn2) from Rattus norvegicus (Rat).